Here is a 370-residue protein sequence, read N- to C-terminus: GTPase Obg (370 aa).

An Obg domain is found at 1–159 (MKFVDEAYID…KKLKLELRVL (159 aa)). The OBG-type G domain occupies 160-333 (ADVGLLGMPN…LVQAIYQHVA (174 aa)). GTP is bound by residues 166–173 (GMPNAGKS), 191–195 (FTTLH), 213–216 (DVPG), 283–286 (NKLD), and 314–316 (SAL). Mg(2+) is bound by residues serine 173 and threonine 193. Positions 346–370 (FAEPEADESDDEPRFAPQADDPRFR) are disordered.

Belongs to the TRAFAC class OBG-HflX-like GTPase superfamily. OBG GTPase family. In terms of assembly, monomer. Mg(2+) is required as a cofactor.

The protein resides in the cytoplasm. Its function is as follows. An essential GTPase which binds GTP, GDP and possibly (p)ppGpp with moderate affinity, with high nucleotide exchange rates and a fairly low GTP hydrolysis rate. Plays a role in control of the cell cycle, stress response, ribosome biogenesis and in those bacteria that undergo differentiation, in morphogenesis control. This is GTPase Obg from Methylibium petroleiphilum (strain ATCC BAA-1232 / LMG 22953 / PM1).